The sequence spans 160 residues: Cytochrome b6-f complex subunit 4 (160 aa).

The next 3 membrane-spanning stretches (helical) occupy residues 36-56 (LLYI…GLSV), 95-115 (LLGV…PFIE), and 131-151 (TLFL…TLPI).

The protein belongs to the cytochrome b family. PetD subfamily. The 4 large subunits of the cytochrome b6-f complex are cytochrome b6, subunit IV (17 kDa polypeptide, petD), cytochrome f and the Rieske protein, while the 4 small subunits are petG, petL, petM and petN. The complex functions as a dimer.

The protein resides in the plastid. The protein localises to the chloroplast thylakoid membrane. Functionally, component of the cytochrome b6-f complex, which mediates electron transfer between photosystem II (PSII) and photosystem I (PSI), cyclic electron flow around PSI, and state transitions. The protein is Cytochrome b6-f complex subunit 4 of Tetradesmus obliquus (Green alga).